The chain runs to 315 residues: MTNEKVNKVALIGAGFVGSSYAFTLINQVITDELVVIDLNQDKAMGDVMDLNHGKAFAPHPVNTWYGDYEDCKDADIVCICAGANQKPGETRLDLVEKNLNIFKGIVDNVMKSGFDGIFLVATNPVDILTYATWKFSGLPKERVIGSGTTLDTARFRYMLSEYFDAAAHNVHAYIIGEHGDTELAVWSHANIGSVPITELMKKNDQYKQEDLDEMMENVRHAAYQIIEKKGATYYGVAMSLARITRAILHNENSILTVSTYLDGEYGADDVYIGVPALVNRNGATEVIELALNDTEKEQFAHSVNVLKEILAPHF.

NAD(+)-binding positions include V17, D38, K43, Y69, and 83-84 (GA). Substrate-binding positions include Q86, R92, and 124–127 (NPVD). NAD(+) contacts are provided by residues 122-124 (ATN) and S147. 152–155 (DTAR) is a binding site for substrate. R157 and H172 together coordinate beta-D-fructose 1,6-bisphosphate. H179 (proton acceptor) is an active-site residue. Y224 is modified (phosphotyrosine). T233 lines the substrate pocket.

This sequence belongs to the LDH/MDH superfamily. LDH family. Homotetramer.

It localises to the cytoplasm. It carries out the reaction (S)-lactate + NAD(+) = pyruvate + NADH + H(+). It participates in fermentation; pyruvate fermentation to lactate; (S)-lactate from pyruvate: step 1/1. With respect to regulation, allosterically activated by fructose 1,6-bisphosphate (FBP). In terms of biological role, catalyzes the conversion of lactate to pyruvate. The protein is L-lactate dehydrogenase of Bacillus pumilus (strain SAFR-032).